The primary structure comprises 473 residues: Inactive pancreatic lipase-related protein 1 (473 aa).

Positions 1-17 are cleaved as a signal peptide; that stretch reads MLILWTIPLFLLGAAQG. Disulfide bonds link Cys21/Cys27 and Cys109/Cys120. The Nucleophile role is filled by Ser171. Asp194 acts as the Charge relay system in catalysis. Residues Glu205, Arg208, Asp210, and Asp213 each contribute to the Ca(2+) site. A disulfide bridge links Cys255 with Cys279. Residue His281 is the Charge relay system of the active site. Cystine bridges form between Cys303-Cys314, Cys317-Cys322, and Cys451-Cys467. The region spanning 356 to 467 is the PLAT domain; the sequence is WRYRVSLTFS…EDILLTLLPC (112 aa).

The protein belongs to the AB hydrolase superfamily. Lipase family. In terms of tissue distribution, expressed in female, but not in male, lacrimal gland. Expressed in male and female sublingual gland and pancreas.

The protein localises to the secreted. May function as inhibitor of dietary triglyceride digestion. Lacks detectable lipase activity (in vitro). This is Inactive pancreatic lipase-related protein 1 (Pnliprp1) from Mus musculus (Mouse).